Consider the following 377-residue polypeptide: Nitric oxide reductase FlRd-NAD(+) reductase (377 aa).

The protein belongs to the FAD-dependent oxidoreductase family. FAD is required as a cofactor.

It localises to the cytoplasm. The catalysed reaction is 2 reduced [nitric oxide reductase rubredoxin domain] + NAD(+) + H(+) = 2 oxidized [nitric oxide reductase rubredoxin domain] + NADH. The protein operates within nitrogen metabolism; nitric oxide reduction. Functionally, one of at least two accessory proteins for anaerobic nitric oxide (NO) reductase. Reduces the rubredoxin moiety of NO reductase. This chain is Nitric oxide reductase FlRd-NAD(+) reductase, found in Salmonella gallinarum (strain 287/91 / NCTC 13346).